The primary structure comprises 279 residues: MTTNGFDPFEWRSFYFPGMSREEAHKLLGEPQVSIGTFLMRDSSRPGEYSLTVREADEGNAVCHYLIERGEPKEDGTAAAGVKIANQSFPDIPALLNHFKMRVLTEASLLAAYKKPIIEVVVGTFKFTGERETDLPFEQGERLEILSKTNQDWWEARNALGTTGLVPANYVQIQMEFHNDRTSKGASQSSIGSSGGGAERFSSASTSSDNIELQPRLPAKAKVTFDRVPNAYDPTQLRVKKGQTVLVTQKMSNGMYKAELDGQIGSVPHTYLRFTAVSE.

The 102-residue stretch at 14-115 (FYFPGMSREE…EASLLAAYKK (102 aa)) folds into the SH2 domain. The region spanning 116-176 (PIIEVVVGTF…PANYVQIQME (61 aa)) is the SH3 1 domain. The disordered stretch occupies residues 181–213 (RTSKGASQSSIGSSGGGAERFSSASTSSDNIEL). The segment covering 202–211 (SSASTSSDNI) has biased composition (polar residues). In terms of domain architecture, SH3 2 spans 214-277 (QPRLPAKAKV…PHTYLRFTAV (64 aa)).

It belongs to the CRK family. As to quaternary structure, interacts with ced-5 (via C-terminus which contains a candidate SH3-binding, proline-rich region). Forms a ternary complex with ced-5 and ced-12. Interacts (via SH2 domain) with src-1 (when activated and phosphorylated at 'Tyr-416').

In terms of biological role, required for cell migration and engulfment of cell corpses but not for programmed cell death/apoptosis. Has a role in the migration of the 2 gonadal distal tip cells (DTCs). Plays a role in protecting dopaminergic neurons from oxidative stress-induced degeneration. The polypeptide is Cell death abnormality protein 2 (Caenorhabditis elegans).